Here is a 694-residue protein sequence, read N- to C-terminus: Elongation factor G (694 aa).

The tr-type G domain maps to E10–L285. Residues A19–T26, D83–H87, and N137–D140 contribute to the GTP site.

Belongs to the TRAFAC class translation factor GTPase superfamily. Classic translation factor GTPase family. EF-G/EF-2 subfamily.

It localises to the cytoplasm. In terms of biological role, catalyzes the GTP-dependent ribosomal translocation step during translation elongation. During this step, the ribosome changes from the pre-translocational (PRE) to the post-translocational (POST) state as the newly formed A-site-bound peptidyl-tRNA and P-site-bound deacylated tRNA move to the P and E sites, respectively. Catalyzes the coordinated movement of the two tRNA molecules, the mRNA and conformational changes in the ribosome. The polypeptide is Elongation factor G (Lactobacillus delbrueckii subsp. bulgaricus (strain ATCC 11842 / DSM 20081 / BCRC 10696 / JCM 1002 / NBRC 13953 / NCIMB 11778 / NCTC 12712 / WDCM 00102 / Lb 14)).